Here is a 1330-residue protein sequence, read N- to C-terminus: Kinectin (1330 aa).

The Cytoplasmic portion of the chain corresponds to 1-6 (MEFYES). Residues 7 to 29 (TYFIVLIPSVVITVIFLFFWLFM) traverse the membrane as a helical; Signal-anchor for type II membrane protein segment. The Lumenal segment spans residues 30 to 1330 (KETLYDEVLA…KEKEHYQVLE (1301 aa)). Disordered regions lie at residues 49-81 (PTKT…ESVP) and 108-218 (SSSV…KQKA). Residues Ser75 and Ser77 each carry the phosphoserine modification. Basic residues predominate over residues 113 to 122 (ERKKKEKKHK). Residues 123-135 (PVLEEQVTKESDV) show a composition bias toward basic and acidic residues. Phosphothreonine is present on Thr153. A Phosphoserine modification is found at Ser156. Residues 161 to 171 (SKKKPGQKKSK) are compositionally biased toward basic residues. N-linked (GlcNAc...) asparagine glycosylation is found at Asn172, Asn435, Asn772, Asn904, and Asn1055. Residues 172 to 182 (NGSDDQDKKVE) show a composition bias toward basic and acidic residues. Residues 332-1329 (HQLQEKDKLL…TKEKEHYQVL (998 aa)) are a coiled coil. Phosphoserine is present on Ser1085. The N-linked (GlcNAc...) asparagine glycan is linked to Asn1236. Ser1286 carries the phosphoserine modification. Asn1302 is a glycosylation site (N-linked (GlcNAc...) asparagine).

This sequence belongs to the kinectin family. Parallel homodimers formed between the membrane-bound and the cytosolic form, and also between 2 cytosolic forms. In terms of tissue distribution, expressed in male brain, heart, kidney, liver, lung, spleen and testis.

Its subcellular location is the endoplasmic reticulum membrane. Receptor for kinesin thus involved in kinesin-driven vesicle motility. This chain is Kinectin (KTN1), found in Vulpes vulpes (Red fox).